The sequence spans 67 residues: UPF0337 protein SP_1805 (67 aa).

The tract at residues M1–E30 is disordered.

It belongs to the UPF0337 (CsbD) family.

In Streptococcus pneumoniae serotype 4 (strain ATCC BAA-334 / TIGR4), this protein is UPF0337 protein SP_1805.